Here is a 472-residue protein sequence, read N- to C-terminus: Protein nucleotidyltransferase YdiU (472 aa).

Gly-86, Gly-88, Arg-89, Lys-109, Asp-121, Gly-122, Arg-172, and Arg-179 together coordinate ATP. The Proton acceptor role is filled by Asp-244. Mg(2+) is bound by residues Asn-245 and Asp-254. ATP is bound at residue Asp-254.

This sequence belongs to the SELO family. Mg(2+) serves as cofactor. The cofactor is Mn(2+).

It catalyses the reaction L-seryl-[protein] + ATP = 3-O-(5'-adenylyl)-L-seryl-[protein] + diphosphate. The catalysed reaction is L-threonyl-[protein] + ATP = 3-O-(5'-adenylyl)-L-threonyl-[protein] + diphosphate. The enzyme catalyses L-tyrosyl-[protein] + ATP = O-(5'-adenylyl)-L-tyrosyl-[protein] + diphosphate. It carries out the reaction L-histidyl-[protein] + UTP = N(tele)-(5'-uridylyl)-L-histidyl-[protein] + diphosphate. It catalyses the reaction L-seryl-[protein] + UTP = O-(5'-uridylyl)-L-seryl-[protein] + diphosphate. The catalysed reaction is L-tyrosyl-[protein] + UTP = O-(5'-uridylyl)-L-tyrosyl-[protein] + diphosphate. Its function is as follows. Nucleotidyltransferase involved in the post-translational modification of proteins. It can catalyze the addition of adenosine monophosphate (AMP) or uridine monophosphate (UMP) to a protein, resulting in modifications known as AMPylation and UMPylation. The protein is Protein nucleotidyltransferase YdiU of Ruegeria sp. (strain TM1040) (Silicibacter sp.).